A 114-amino-acid polypeptide reads, in one-letter code: Photosystem II reaction center Psb28 protein (114 aa).

This sequence belongs to the Psb28 family. Part of the photosystem II complex.

The protein localises to the plastid. Its subcellular location is the chloroplast thylakoid membrane. This is Photosystem II reaction center Psb28 protein from Gracilaria tenuistipitata var. liui (Red alga).